The sequence spans 382 residues: Alpha-2B adrenergic receptor (382 aa).

The chain crosses the membrane as a helical span at residues 1 to 25 (AIAAVITFLILFTIFGNALVILAVL). The Cytoplasmic segment spans residues 26–36 (TSRSLRAPQNL). Residues 37–62 (FLVSLAAADILVATLIIPFSLANELL) traverse the membrane as a helical segment. Topologically, residues 63–72 (GYWYFRHTWC) are extracellular. Residues Cys72 and Cys151 are joined by a disulfide bond. Residues 73 to 95 (EVYLALDVLFCTSSIVHLCAISL) form a helical membrane-spanning segment. Over 96 to 117 (DRYWSVSRALEYNSKRTPRRIK) the chain is Cytoplasmic. The chain crosses the membrane as a helical span at residues 118–140 (GIILTVWLIAAFISLPPLIYKGD). Over 141–156 (KGKKPGGRPQCKLNEE) the chain is Extracellular. The helical transmembrane segment at 157 to 180 (AWYILSSSIGSFFAPCLIMILVYL) threads the bilayer. The Cytoplasmic portion of the chain corresponds to 181-346 (RIYLIAKRRN…MNREKRFTFV (166 aa)). Positions 192 to 305 (QGPHGKQAPG…QGTPNFQPSQ (114 aa)) are disordered. Residues 271–284 (EEEEEEEEEEEEEC) show a composition bias toward acidic residues. Residues 291 to 305 (TSSSLQGTPNFQPSQ) show a composition bias toward polar residues. The chain crosses the membrane as a helical span at residues 347 to 370 (LAVVIGVFVLCWFPFFFSYSLGAI). Residues 371 to 379 (CPQHCKVPH) are Extracellular-facing. Residues 380–382 (GLF) traverse the membrane as a helical segment.

This sequence belongs to the G-protein coupled receptor 1 family. Adrenergic receptor subfamily. ADRA2B sub-subfamily. In terms of assembly, interacts with RAB26. Interacts with PPP1R9B. Interacts with GGA1, GGA2 and GGA3.

The protein resides in the cell membrane. In terms of biological role, alpha-2 adrenergic receptors mediate the catecholamine-induced inhibition of adenylate cyclase through the action of G proteins. The protein is Alpha-2B adrenergic receptor (ADRA2B) of Didelphis virginiana (North American opossum).